We begin with the raw amino-acid sequence, 743 residues long: Photosystem I P700 chlorophyll a apoprotein A2 (743 aa).

8 helical membrane passes run 46 to 69 (IFATHFGHVAIIFLWASSLLFHVA), 135 to 158 (LYMGAVFLLILASVFLFAGWLHLQ), 175 to 199 (LNHHLAGLFGVSSLAWAGHLIHVAI), 273 to 291 (MAHHHLAIAVIFIIAGHMY), 336 to 359 (LHFQLGIHLAALGTITSLVAQHMY), 375 to 401 (AALYTHHQYIAIFLMLGAFAHGAIFWV), 423 to 445 (AIISHLSWVSLFLGFHTLGLYVH), and 526 to 544 (FLVHHAFALALHTTVLILV). 2 residues coordinate [4Fe-4S] cluster: C568 and C577. Helical transmembrane passes span 584-605 (AFYLATFWALNTVGWVTFYWHW) and 652-674 (LSVWAWMFLFGHLVWATGFMFLI). Chlorophyll a contacts are provided by H663, M671, and Y679. A phylloquinone-binding site is contributed by W680. The helical transmembrane segment at 716 to 736 (LVGLTHFTVGYVLTYAAFLIA) threads the bilayer.

It belongs to the PsaA/PsaB family. The PsaA/B heterodimer binds the P700 chlorophyll special pair and subsequent electron acceptors. PSI consists of a core antenna complex that captures photons, and an electron transfer chain that converts photonic excitation into a charge separation. The cyanobacterial PSI reaction center is composed of one copy each of PsaA,B,C,D,E,F,I,J,K,L,M and X, and forms trimeric complexes. The cofactor is PSI electron transfer chain: 5 chlorophyll a, 1 chlorophyll a', 2 phylloquinones and 3 4Fe-4S clusters. PSI core antenna: 90 chlorophyll a, 22 carotenoids, 3 phospholipids and 1 galactolipid. P700 is a chlorophyll a/chlorophyll a' dimer, A0 is one or more chlorophyll a, A1 is one or both phylloquinones and FX is a shared 4Fe-4S iron-sulfur center..

It is found in the cellular thylakoid membrane. It catalyses the reaction reduced [plastocyanin] + hnu + oxidized [2Fe-2S]-[ferredoxin] = oxidized [plastocyanin] + reduced [2Fe-2S]-[ferredoxin]. Functionally, psaA and PsaB bind P700, the primary electron donor of photosystem I (PSI), as well as the electron acceptors A0, A1 and FX. PSI is a plastocyanin/cytochrome c6-ferredoxin oxidoreductase, converting photonic excitation into a charge separation, which transfers an electron from the donor P700 chlorophyll pair to the spectroscopically characterized acceptors A0, A1, FX, FA and FB in turn. Oxidized P700 is reduced on the lumenal side of the thylakoid membrane by plastocyanin or cytochrome c6. The sequence is that of Photosystem I P700 chlorophyll a apoprotein A2 from Mastigocladus laminosus (Fischerella sp.).